We begin with the raw amino-acid sequence, 334 residues long: Ephrin-B1 (334 aa).

The signal sequence occupies residues 1–25 (MARPRGGRWLLGVLLALCRLAAPLA). In terms of domain architecture, Ephrin RBD spans 26-160 (KSLEPVSWSA…TRSMKIVMKV (135 aa)). The Extracellular portion of the chain corresponds to 26-231 (KSLEPVSWSA…FLSSKVAVFA (206 aa)). Cystine bridges form between C60–C97 and C85–C149. Residue N135 is glycosylated (N-linked (GlcNAc...) asparagine). Residues 175 to 218 (SRPSKEADNTVKIVTQSPRHKVPTVEEPGKPGSVNQNGQETQGP) are disordered. The span at 207 to 218 (SVNQNGQETQGP) shows a compositional bias: polar residues. A helical membrane pass occupies residues 232–252 (AIGAGCVIFILIIIFLVVLLI). The Cytoplasmic segment spans residues 253–334 (KIRKRHRKHT…QSPANIYYKV (82 aa)). The short motif at 332–334 (YKV) is the PDZ-binding element.

Belongs to the ephrin family. As to quaternary structure, binds to the receptor tyrosine kinase EPHB2. Interacts with GRIP1 and GRIP2. Inducible phosphorylation of tyrosine residues in the cytoplasmic domain.

The protein localises to the membrane. Cell surface transmembrane ligand for Eph receptors, a family of receptor tyrosine kinases which are crucial for migration, repulsion and adhesion during neuronal, vascular and epithelial development. Binds promiscuously Eph receptors residing on adjacent cells, leading to contact-dependent bidirectional signaling into neighboring cells. The signaling pathway downstream of the receptor is referred to as forward signaling while the signaling pathway downstream of the ephrin ligand is referred to as reverse signaling. In Gallus gallus (Chicken), this protein is Ephrin-B1 (EFNB1).